Here is a 492-residue protein sequence, read N- to C-terminus: Putative heme-binding protein VNG_2021C (492 aa).

Histidine 177 contributes to the heme binding site. The disordered stretch occupies residues 253–301; it reads AGERVPAPEGGADAHGEGERTHHHGDSDHHDGDDGEQHHHSTGDEADDG. Basic and acidic residues predominate over residues 264 to 301; the sequence is ADAHGEGERTHHHGDSDHHDGDDGEQHHHSTGDEADDG. Residues 402 to 490 enclose the ABM domain; that stretch reads GTMGMFYETK…VLADRPRHVF (89 aa).

In the N-terminal section; belongs to the ChdC family.

The polypeptide is Putative heme-binding protein VNG_2021C (Halobacterium salinarum (strain ATCC 700922 / JCM 11081 / NRC-1) (Halobacterium halobium)).